We begin with the raw amino-acid sequence, 923 residues long: Leucine--tRNA ligase (923 aa).

The 'HIGH' region motif lies at 41 to 52 (PYPSGEGLHVGH). The 'KMSKS' region signature appears at 698–702 (KMSKS). An ATP-binding site is contributed by Lys-701.

Belongs to the class-I aminoacyl-tRNA synthetase family.

It localises to the cytoplasm. The enzyme catalyses tRNA(Leu) + L-leucine + ATP = L-leucyl-tRNA(Leu) + AMP + diphosphate. This chain is Leucine--tRNA ligase, found in Amoebophilus asiaticus (strain 5a2).